The chain runs to 570 residues: Sulfite reductase [NADPH] hemoprotein beta-component (570 aa).

Residues C434, C440, C479, and C483 each contribute to the [4Fe-4S] cluster site. A siroheme-binding site is contributed by C483.

This sequence belongs to the nitrite and sulfite reductase 4Fe-4S domain family. As to quaternary structure, alpha(8)-beta(8). The alpha component is a flavoprotein, the beta component is a hemoprotein. It depends on siroheme as a cofactor. [4Fe-4S] cluster is required as a cofactor.

It catalyses the reaction hydrogen sulfide + 3 NADP(+) + 3 H2O = sulfite + 3 NADPH + 4 H(+). It participates in sulfur metabolism; hydrogen sulfide biosynthesis; hydrogen sulfide from sulfite (NADPH route): step 1/1. Its function is as follows. Component of the sulfite reductase complex that catalyzes the 6-electron reduction of sulfite to sulfide. This is one of several activities required for the biosynthesis of L-cysteine from sulfate. The polypeptide is Sulfite reductase [NADPH] hemoprotein beta-component (Salmonella typhi).